We begin with the raw amino-acid sequence, 276 residues long: NH(3)-dependent NAD(+) synthetase (276 aa).

Residue 46–53 (GISGGQDS) participates in ATP binding. Aspartate 52 is a Mg(2+) binding site. Arginine 141 is a binding site for deamido-NAD(+). Threonine 161 is an ATP binding site. Glutamate 166 lines the Mg(2+) pocket. Residues lysine 174 and aspartate 181 each contribute to the deamido-NAD(+) site. ATP is bound by residues lysine 190 and threonine 212. 261–262 (HK) provides a ligand contact to deamido-NAD(+).

It belongs to the NAD synthetase family. As to quaternary structure, homodimer.

The catalysed reaction is deamido-NAD(+) + NH4(+) + ATP = AMP + diphosphate + NAD(+) + H(+). The protein operates within cofactor biosynthesis; NAD(+) biosynthesis; NAD(+) from deamido-NAD(+) (ammonia route): step 1/1. Its function is as follows. Catalyzes the ATP-dependent amidation of deamido-NAD to form NAD. Uses ammonia as a nitrogen source. The sequence is that of NH(3)-dependent NAD(+) synthetase from Limosilactobacillus fermentum (strain NBRC 3956 / LMG 18251) (Lactobacillus fermentum).